A 472-amino-acid polypeptide reads, in one-letter code: MNIKKIVKQATVLTFTTALLAGGATQAFAKENNQKAYKETYGVSHITRHDMLQIPKQQQNEKYQVPQFDQSTIKNIESAKGLDVWDSWPLQNADGTVAEYNGYHVVFALAGSPKDADDTSIYMFYQKVGDNSIDSWKNAGRVFKDSDKFDANDPILKDQTQEWSGSATFTSDGKIRLFYTDYSGKHYGKQSLTTAQVNVSKSDDTLKINGVEDHKTIFDGDGKTYQNVQQFIDEGNYTSGDNHTLRDPHYVEDKGHKYLVFEANTGTENGYQGEESLFNKAYYGGGTNFFRKESQKLQQSAKKRDAELANGALGIIELNNDYTLKKVMKPLITSNTVTDEIERANVFKMNGKWYLFTDSRGSKMTIDGINSNDIYMLGYVSNSLTGPYKPLNKTGLVLQMGLDPNDVTFTYSHFAVPQAKGNNVVITSYMTNRGFFEDKKATFGPSFLMNIKGNKTSVVKNSILEQGQLTVN.

An N-terminal signal peptide occupies residues 1–29 (MNIKKIVKQATVLTFTTALLAGGATQAFA). Positions 85, 86, and 164 each coordinate sucrose. The active-site Nucleophile is the D86. D241 provides a ligand contact to Ca(2+). The sucrose site is built by R246 and D247. Residues Q272, L308, N310, and D339 each coordinate Ca(2+). E340 is a sucrose binding site. The Proton donor/acceptor role is filled by E342. R360 is a sucrose binding site.

Belongs to the glycosyl hydrolase 68 family.

It localises to the secreted. It catalyses the reaction [6)-beta-D-fructofuranosyl-(2-&gt;](n) alpha-D-glucopyranoside + sucrose = [6)-beta-D-fructofuranosyl-(2-&gt;](n+1) alpha-D-glucopyranoside + D-glucose. With respect to regulation, ca(2+) may play an important structural role and promote stability of levansucrase. Its function is as follows. Catalyzes the synthesis of levan, a fructose polymer, by transferring the fructosyl moiety from sucrose to a growing acceptor molecule. Also displays sucrose hydrolase activity. This Bacillus amyloliquefaciens (Bacillus velezensis) protein is Levansucrase.